The sequence spans 93 residues: Small ribosomal subunit protein uS19 (93 aa).

It belongs to the universal ribosomal protein uS19 family.

Functionally, protein S19 forms a complex with S13 that binds strongly to the 16S ribosomal RNA. The polypeptide is Small ribosomal subunit protein uS19 (Synechococcus sp. (strain JA-2-3B'a(2-13)) (Cyanobacteria bacterium Yellowstone B-Prime)).